The sequence spans 172 residues: MKLVVAAVLAMAASRWRRLSAHGQVPSSTCADMLPVHGNAMPSTALPYTITVSPTSVNGGDTVRVHISGTEEFRGVYLQRGGAKSSRRVPAARRREQQDRPVRLPAGHNNAFSYISRTPLDTLDIDWKAPYTSDEIVFRATFVKSFSEFWVGVESPKITLGPLRQLDNAVAA.

Residues 1–21 (MKLVVAAVLAMAASRWRRLSA) form the signal peptide. Residues 22–172 (HGQVPSSTCA…LRQLDNAVAA (151 aa)) enclose the Reelin domain.

This sequence belongs to the insect defense protein family. In terms of tissue distribution, in adults, in hemolymph.

It is found in the secreted. In terms of biological role, may have antimicrobial activity. The sequence is that of Putative defense protein from Locusta migratoria (Migratory locust).